Consider the following 532-residue polypeptide: Cytokinin dehydrogenase 8 (532 aa).

The N-terminal stretch at 1–26 (MELKAMYLYAAVLAVLLCSSVNFIQS) is a signal peptide. In terms of domain architecture, FAD-binding PCMH-type spans 51–238 (VSDAPFAVMR…TRARIPLQLA (188 aa)). The FAD site is built by alanine 87, glycine 89, and glycine 91. Position 92 is a pros-8alpha-FAD histidine (histidine 92). Residues serine 93, glutamine 97, aspartate 162, threonine 167, serine 173, isoleucine 177, and isoleucine 228 each coordinate FAD. An N-linked (GlcNAc...) asparagine glycan is attached at asparagine 420. Positions 482 and 520 each coordinate FAD.

The protein belongs to the oxygen-dependent FAD-linked oxidoreductase family. As to quaternary structure, monomer. FAD serves as cofactor.

It is found in the secreted. It localises to the extracellular space. The enzyme catalyses N(6)-dimethylallyladenine + A + H2O = 3-methyl-2-butenal + adenine + AH2. Functionally, catalyzes the oxidation of cytokinins, a family of N(6)-substituted adenine derivatives that are plant hormones, where the substituent is an isopentenyl group. The protein is Cytokinin dehydrogenase 8 (CKX8) of Oryza sativa subsp. indica (Rice).